The following is a 433-amino-acid chain: 26S proteasome regulatory subunit 7 (433 aa).

The segment at 1–22 (MPDYLGADQRKTKEDEKDDKPI) is disordered. The span at 8–22 (DQRKTKEDEKDDKPI) shows a compositional bias: basic and acidic residues. N6-acetyllysine is present on lysine 116. Residue 216 to 223 (GPPGTGKT) coordinates ATP. Position 422 is an N6-acetyllysine (lysine 422).

This sequence belongs to the AAA ATPase family. Component of the 19S proteasome regulatory particle complex. The 26S proteasome consists of a 20S core particle (CP) and two 19S regulatory subunits (RP). The regulatory particle is made of a lid composed of 9 subunits, a base containing 6 ATPases including PSMC2 and few additional components. Interacts with NDC80/HEC; this interaction is detected only during M phase. Interacts and SQSTM1. Interacts with PAAF1. Directly interacts with TRIM5. Monoubiquitinated by RNF181. Post-translationally, phosphorylated. Dephosphorylated by UBLCP1 which impairs PSMC2 ATPase activity and disrupts 26S proteasome assembly.

It is found in the cytoplasm. Its subcellular location is the nucleus. In terms of biological role, component of the 26S proteasome, a multiprotein complex involved in the ATP-dependent degradation of ubiquitinated proteins. This complex plays a key role in the maintenance of protein homeostasis by removing misfolded or damaged proteins, which could impair cellular functions, and by removing proteins whose functions are no longer required. Therefore, the proteasome participates in numerous cellular processes, including cell cycle progression, apoptosis, or DNA damage repair. PSMC2 belongs to the heterohexameric ring of AAA (ATPases associated with diverse cellular activities) proteins that unfolds ubiquitinated target proteins that are concurrently translocated into a proteolytic chamber and degraded into peptides. This Bos taurus (Bovine) protein is 26S proteasome regulatory subunit 7 (PSMC2).